Reading from the N-terminus, the 341-residue chain is Foldase protein PrsA (341 aa).

The first 22 residues, 1–22 (MKNIGRLAVTALIAVFIFSVTG), serve as a signal peptide directing secretion. The N-palmitoyl cysteine moiety is linked to residue Cys-23. A lipid anchor (S-diacylglycerol cysteine) is attached at Cys-23. One can recognise a PpiC domain in the interval 199–291 (PNKMHLAHIL…FGYHIIKCIK (93 aa)).

The protein belongs to the PrsA family.

It localises to the cell membrane. The catalysed reaction is [protein]-peptidylproline (omega=180) = [protein]-peptidylproline (omega=0). In terms of biological role, plays a major role in protein secretion by helping the post-translocational extracellular folding of several secreted proteins. The sequence is that of Foldase protein PrsA from Clostridium kluyveri (strain NBRC 12016).